The following is a 447-amino-acid chain: GTPase Der (447 aa).

2 EngA-type G domains span residues Gln4 to Glu165 and Leu180 to Asn357. GTP contacts are provided by residues Gly10–Ser17, Asp57–Leu61, Asn119–Glu122, Gly186–Ser193, Asp233–Leu237, and Asn298–Asp301. The region spanning Lys358–Lys443 is the KH-like domain.

Belongs to the TRAFAC class TrmE-Era-EngA-EngB-Septin-like GTPase superfamily. EngA (Der) GTPase family. Associates with the 50S ribosomal subunit.

GTPase that plays an essential role in the late steps of ribosome biogenesis. This Rickettsia rickettsii (strain Iowa) protein is GTPase Der.